Consider the following 428-residue polypeptide: tRNA modification GTPase MnmE (428 aa).

(6S)-5-formyl-5,6,7,8-tetrahydrofolate is bound by residues R20, E76, and R116. The 140-residue stretch at 212-351 (GFEVAIVGAP…LVAAIGERLL (140 aa)) folds into the TrmE-type G domain. N222 lines the K(+) pocket. GTP-binding positions include 222–227 (NAGKST), 241–247 (SEIAGTT), and 266–269 (DTAG). Residue S226 coordinates Mg(2+). K(+) is bound by residues S241, I243, and T246. Mg(2+) is bound at residue T247. A (6S)-5-formyl-5,6,7,8-tetrahydrofolate-binding site is contributed by K428.

It belongs to the TRAFAC class TrmE-Era-EngA-EngB-Septin-like GTPase superfamily. TrmE GTPase family. Homodimer. Heterotetramer of two MnmE and two MnmG subunits. The cofactor is K(+).

Its subcellular location is the cytoplasm. Functionally, exhibits a very high intrinsic GTPase hydrolysis rate. Involved in the addition of a carboxymethylaminomethyl (cmnm) group at the wobble position (U34) of certain tRNAs, forming tRNA-cmnm(5)s(2)U34. The polypeptide is tRNA modification GTPase MnmE (Cereibacter sphaeroides (strain ATCC 17029 / ATH 2.4.9) (Rhodobacter sphaeroides)).